Consider the following 440-residue polypeptide: Gap junction alpha-8 protein (440 aa).

The stretch at 2–12 (GDWSFLGNILE) is an intramembrane region. Residues 13 to 21 (EVNEHSTVI) lie on the Cytoplasmic side of the membrane. The chain crosses the membrane as a helical span at residues 22–42 (GRVWLTVLFIFRILILGTAAE). The Extracellular segment spans residues 43–71 (FVWGDEQSDFVCNTQQPGCENVCYDEAFP). Disulfide bonds link Cys-54/Cys-201, Cys-61/Cys-195, and Cys-65/Cys-190. The helical transmembrane segment at 72 to 92 (ISHIRLWVLQIIFVSTPSLMY) threads the bilayer. Residues 93–161 (VGHAVHHVRM…GTLLRTYVCH (69 aa)) lie on the Cytoplasmic side of the membrane. The disordered stretch occupies residues 111–143 (AEELCQQSRSNGGERVPIAPDQASIRKSSSSSK). The chain crosses the membrane as a helical span at residues 162-182 (IIFKTLFEVGFIVGHYFLYGF). The Extracellular portion of the chain corresponds to 183–210 (RILPLYRCSRWPCPNVVDCFVSRPTEKT). A helical transmembrane segment spans residues 211 to 231 (IFILFMLSVAFVSLFLNIMEM). Residues 232-440 (SHLGMKGIRS…SRARSDDLTI (209 aa)) lie on the Cytoplasmic side of the membrane. The segment at 334–440 (GAQEVEREEQ…SRARSDDLTI (107 aa)) is disordered. Composition is skewed to basic and acidic residues over residues 353–364 (VGEKKQEAEKVA) and 375–399 (DGEK…EKVT). The span at 423-432 (LSRLSKASSR) shows a compositional bias: low complexity.

It belongs to the connexin family. Alpha-type (group II) subfamily. As to quaternary structure, a hemichannel or connexon is composed of a hexamer of connexins. A functional gap junction is formed by the apposition of two hemichannels. Forms heteromeric channels with GJA3. As to expression, detected in eye lens (at protein level).

The protein resides in the cell membrane. It localises to the cell junction. Its subcellular location is the gap junction. In terms of biological role, structural component of eye lens gap junctions. Gap junctions are dodecameric channels that connect the cytoplasm of adjoining cells. They are formed by the docking of two hexameric hemichannels, one from each cell membrane. Small molecules and ions diffuse from one cell to a neighboring cell via the central pore. The polypeptide is Gap junction alpha-8 protein (Gja8) (Rattus norvegicus (Rat)).